Here is a 38-residue protein sequence, read N- to C-terminus: MSGPNPNKQPVELNRTSLYWGLLCIFVLAILFSSYFFN.

A helical transmembrane segment spans residues 17-37 (SLYWGLLCIFVLAILFSSYFF).

Belongs to the PsbL family. As to quaternary structure, PSII is composed of 1 copy each of membrane proteins PsbA, PsbB, PsbC, PsbD, PsbE, PsbF, PsbH, PsbI, PsbJ, PsbK, PsbL, PsbM, PsbT, PsbX, PsbY, PsbZ, Psb30/Ycf12, at least 3 peripheral proteins of the oxygen-evolving complex and a large number of cofactors. It forms dimeric complexes.

It localises to the plastid. Its subcellular location is the chloroplast thylakoid membrane. In terms of biological role, one of the components of the core complex of photosystem II (PSII). PSII is a light-driven water:plastoquinone oxidoreductase that uses light energy to abstract electrons from H(2)O, generating O(2) and a proton gradient subsequently used for ATP formation. It consists of a core antenna complex that captures photons, and an electron transfer chain that converts photonic excitation into a charge separation. This subunit is found at the monomer-monomer interface and is required for correct PSII assembly and/or dimerization. The chain is Photosystem II reaction center protein L from Cyanidioschyzon merolae (strain NIES-3377 / 10D) (Unicellular red alga).